The sequence spans 211 residues: CASP-like protein 1B1 (211 aa).

Residues 1–29 (MDLERGSKTPPSSAPAAAAATTTTSTCCS) are disordered. Topologically, residues 1–55 (MDLERGSKTPPSSAPAAAAATTTTSTCCSNKRPQLRDRLVALQPVVLRAAATLAT) are cytoplasmic. Residues 9–26 (TPPSSAPAAAAATTTTST) are compositionally biased toward low complexity. A helical transmembrane segment spans residues 56–76 (AVAAAVMALNAQSYTAVVAIV). Residues 77–94 (GTRPLTQTFTTKFRDTPA) are Extracellular-facing. The chain crosses the membrane as a helical span at residues 95 to 115 (FVYFVIANAIAAVYNLVMLLF). At 116-123 (RCLILRRR) the chain is on the cytoplasmic side. The helical transmembrane segment at 124 to 144 (MAGLVVHMLDMVIMALLATGA) threads the bilayer. The Extracellular portion of the chain corresponds to 145–176 (ATAAAMAELGKNGNVHARWNPICDRFGSFCSR). The chain crosses the membrane as a helical span at residues 177 to 197 (GGVALASSFTGVALMLALNLL). The Cytoplasmic portion of the chain corresponds to 198–211 (SAASNAQCSPGQYE).

This sequence belongs to the Casparian strip membrane proteins (CASP) family. As to quaternary structure, homodimer and heterodimers.

The protein resides in the cell membrane. The polypeptide is CASP-like protein 1B1 (Sorghum bicolor (Sorghum)).